A 265-amino-acid polypeptide reads, in one-letter code: Protein IL-40 (265 aa).

Positions 1 to 20 are cleaved as a signal peptide; that stretch reads MGLPGLFCLAVLAASSFSKA. N-linked (GlcNAc...) asparagine glycans are attached at residues N86 and N132.

Expressed in fetal liver and bone marrow. Expressed in peripheral blood lymphocyte B cells.

The protein resides in the secreted. Its function is as follows. Probable B cell-associated cytokine that plays a role in the regulation of humoral immune responses. Involved in lymphocyte B cell development and immunoglobulin/IgA production. The chain is Protein IL-40 from Homo sapiens (Human).